Reading from the N-terminus, the 518-residue chain is Lysine--tRNA ligase (518 aa).

Residues Glu-407 and Glu-414 each contribute to the Mg(2+) site.

Belongs to the class-II aminoacyl-tRNA synthetase family. Homodimer. Mg(2+) serves as cofactor.

It is found in the cytoplasm. It catalyses the reaction tRNA(Lys) + L-lysine + ATP = L-lysyl-tRNA(Lys) + AMP + diphosphate. The sequence is that of Lysine--tRNA ligase from Helicobacter hepaticus (strain ATCC 51449 / 3B1).